The following is a 62-amino-acid chain: Photosystem II reaction center protein Z (62 aa).

A run of 2 helical transmembrane segments spans residues 8–28 (SVFALIILSFLLVIGVPVVLA) and 41–61 (FSGASLWIGLVFLVGILNSFI).

The protein belongs to the PsbZ family. In terms of assembly, PSII is composed of 1 copy each of membrane proteins PsbA, PsbB, PsbC, PsbD, PsbE, PsbF, PsbH, PsbI, PsbJ, PsbK, PsbL, PsbM, PsbT, PsbY, PsbZ, Psb30/Ycf12, at least 3 peripheral proteins of the oxygen-evolving complex and a large number of cofactors. It forms dimeric complexes.

It localises to the plastid. The protein localises to the chloroplast thylakoid membrane. In terms of biological role, may control the interaction of photosystem II (PSII) cores with the light-harvesting antenna, regulates electron flow through the 2 photosystem reaction centers. PSII is a light-driven water plastoquinone oxidoreductase, using light energy to abstract electrons from H(2)O, generating a proton gradient subsequently used for ATP formation. In Staurastrum punctulatum (Green alga), this protein is Photosystem II reaction center protein Z.